The primary structure comprises 687 residues: Polyphosphate kinase (687 aa).

Residue asparagine 45 participates in ATP binding. Residues arginine 375 and arginine 405 each contribute to the Mg(2+) site. Residue histidine 435 is the Phosphohistidine intermediate of the active site. ATP contacts are provided by tyrosine 472, arginine 568, and histidine 596.

It belongs to the polyphosphate kinase 1 (PPK1) family. Mg(2+) serves as cofactor. In terms of processing, an intermediate of this reaction is the autophosphorylated ppk in which a phosphate is covalently linked to a histidine residue through a N-P bond.

The enzyme catalyses [phosphate](n) + ATP = [phosphate](n+1) + ADP. Catalyzes the reversible transfer of the terminal phosphate of ATP to form a long-chain polyphosphate (polyP). In Burkholderia ambifaria (strain MC40-6), this protein is Polyphosphate kinase.